The chain runs to 237 residues: tRNA1(Val) (adenine(37)-N6)-methyltransferase (237 aa).

It belongs to the methyltransferase superfamily. tRNA (adenine-N(6)-)-methyltransferase family.

It localises to the cytoplasm. The enzyme catalyses adenosine(37) in tRNA1(Val) + S-adenosyl-L-methionine = N(6)-methyladenosine(37) in tRNA1(Val) + S-adenosyl-L-homocysteine + H(+). Functionally, specifically methylates the adenine in position 37 of tRNA(1)(Val) (anticodon cmo5UAC). The protein is tRNA1(Val) (adenine(37)-N6)-methyltransferase of Bacteroides fragilis (strain YCH46).